We begin with the raw amino-acid sequence, 494 residues long: UPF0371 protein spyM18_1356 (494 aa).

Belongs to the UPF0371 family.

This Streptococcus pyogenes serotype M18 (strain MGAS8232) protein is UPF0371 protein spyM18_1356.